The chain runs to 2499 residues: Polyprotein P1234 (2499 aa).

Positions valine 30–histidine 260 constitute an Alphavirus-like MT domain. The nsP1 membrane-binding stretch occupies residues glycine 245–valine 264. Residue cysteine 420 is the site of S-palmitoyl cysteine; by host attachment. The 156-residue stretch at glutamate 694 to lysine 849 folds into the (+)RNA virus helicase ATP-binding domain. An a ribonucleoside 5'-triphosphate-binding site is contributed by glycine 725–serine 732. One can recognise a (+)RNA virus helicase C-terminal domain in the interval tyrosine 850 to aspartate 998. Residues aspartate 1011–tyrosine 1339 enclose the Peptidase C9 domain. The interval proline 1012–threonine 1031 is nucleolus localization signal. Residue cysteine 1020 is the For cysteine protease nsP2 activity of the active site. The Nuclear export signal signature appears at threonine 1065–serine 1074. Histidine 1097 (for cysteine protease nsP2 activity) is an active-site residue. The short motif at valine 1194 to isoleucine 1198 is the Nuclear localization signal element. The Macro domain maps to alanine 1346–glutamate 1505. 5 residues coordinate ADP-D-ribose: asparagine 1369, glycine 1377, glycine 1457, isoleucine 1458, and tyrosine 1459. The Zn(2+) site is built by cysteine 1608, cysteine 1610, cysteine 1633, and cysteine 1651. Short sequence motifs (FGDF; binding to host G3BP1) lie at residues phenylalanine 1845–phenylalanine 1848 and phenylalanine 1865–phenylalanine 1868. The region spanning histidine 2253–alanine 2368 is the RdRp catalytic domain.

In terms of assembly, interacts with non-structural protein 3. Interacts with RNA-directed RNA polymerase nsP4. Interacts with protease nsP2. interacts with itself. As to quaternary structure, interacts with mRNA-capping enzyme nsP1. Interacts with host DDX1. Interacts with host DDX3. Interacts (via C-terminus) with host G3BP1; this interaction inhibits the formation of host stress granules on viral mRNAs and the nsp3-G3BP1 complexes bind viral RNAs and probably orchestrate the assembly of viral replication complexes. Interacts (via C-terminus) with host G3BP2; this interaction inhibits the formation of host stress granules on viral mRNAs and the nsp3-G3BP2 complexes bind viral RNAs and probably orchestrate the assembly of viral replication complexes. Interacts with mRNA-capping enzyme nsP1. Interacts with protease nsP2. interacts with itself. In terms of assembly, interacts with RNA-directed RNA polymerase nsP4. Interacts with mRNA-capping enzyme nsP1. Interacts with KPNA1/karyopherin-alpha1; this interaction probably allows the active transport of protease nsP2 into the host nucleus. The cofactor is Mg(2+). Mn(2+) serves as cofactor. Post-translationally, specific enzymatic cleavages in vivo yield mature proteins. The processing of the polyprotein is temporally regulated. In early stages (1.7 hpi), P1234 is first cleaved in trans through its nsP2 protease activity, releasing P123' and nsP4, which associate to form the early replication complex. At the same time, P1234 is also cut at the nsP1/nsP2 site early in infection but with lower efficiency. After replication of the viral minus-strand RNAs (4 hpi), the polyproteins are cut at the nsP1/nsP2 and nsP2/nsP3 sites very efficiently, preventing accumulation of P123' and P1234 and allowing the formation of the late replication complex. NsP3'/nsP4 site is not cleaved anymore and P34 is produced rather than nsP4. In terms of processing, specific enzymatic cleavages in vivo yield mature proteins. The processing of the polyprotein is temporally regulated. In early stages (1.7 hpi), P123 is cleaved at the nsP1/nsP2 site with low efficiency. After replication of the viral minus-strand RNAs (4 hpi), the polyproteins are cut at the nsP1/nsP2 and nsP2/nsP3 sites very efficiently, preventing accumulation of P123 and allowing the formation of the late replication complex. Specific enzymatic cleavages in vivo yield mature proteins. The processing of the polyprotein is temporally regulated. In early stages (1.7 hpi), P123' is cleaved at the nsP1/nsP2 site with low efficiency. After replication of the viral minus-strand RNAs (4 hpi), the polyproteins are cut at the nsP1/nsP2 and nsP2/nsP3 sites very efficiently, preventing accumulation of P123' and allowing the formation of the late replication complex. Post-translationally, palmitoylated by host palmitoyltransferases ZDHHC2 and ZDHHC19. In terms of processing, phosphorylated by host on serines and threonines. Ubiquitinated; targets the protein for rapid degradation via the ubiquitin system. Nsp4 is present in extremely low quantities due to low frequency of translation through the amber stop-codon and the degradation by the ubiquitin pathway.

It is found in the host cytoplasmic vesicle membrane. It localises to the host cell membrane. The protein resides in the host cell projection. The protein localises to the host filopodium. Its subcellular location is the host nucleus. It is found in the host cytoplasm. The catalysed reaction is GTP + S-adenosyl-L-methionine = N(7)-methyl-GTP + S-adenosyl-L-homocysteine. The enzyme catalyses N(7)-methyl-GTP + L-histidyl-[protein] = N(tele)-(N(7)-methylguanosine 5'-phospho)-L-histidyl-[protein] + diphosphate. It carries out the reaction N(tele)-(N(7)-methylguanosine 5'-phospho)-L-histidyl-[protein] + a 5'-end diphospho-(purine-ribonucleoside) in mRNA + H(+) = a 5'-end (N(7)-methyl 5'-triphosphoguanosine)-(purine-ribonucleoside) in mRNA + L-histidyl-[protein]. It catalyses the reaction a 5'-end triphospho-ribonucleoside in mRNA + H2O = a 5'-end diphospho-ribonucleoside in mRNA + phosphate + H(+). The catalysed reaction is a ribonucleoside 5'-triphosphate + H2O = a ribonucleoside 5'-diphosphate + phosphate + H(+). The enzyme catalyses ATP + H2O = ADP + phosphate + H(+). It carries out the reaction RNA(n) + a ribonucleoside 5'-triphosphate = RNA(n+1) + diphosphate. It catalyses the reaction RNA(n) + ATP = RNA(n)-3'-adenine ribonucleotide + diphosphate. The catalysed reaction is 4-O-(ADP-D-ribosyl)-L-aspartyl-[protein] + H2O = L-aspartyl-[protein] + ADP-D-ribose + H(+). The enzyme catalyses 5-O-(ADP-D-ribosyl)-L-glutamyl-[protein] + H2O = L-glutamyl-[protein] + ADP-D-ribose + H(+). It carries out the reaction ADP-alpha-D-ribose 1''-phosphate + H2O = ADP-D-ribose + phosphate. Its function is as follows. Inactive precursor of the viral replicase, which is activated by cleavages carried out by the viral protease nsP2. In terms of biological role, the early replication complex formed by the polyprotein P123 and nsP4 synthesizes minus-strand RNAs. As soon P123 is cleaved into mature proteins, the plus-strand RNAs synthesis begins. Functionally, the early replication complex formed by the polyprotein P123' and nsP4 synthesizes minus-strand RNAs. Polyprotein P123' is a short-lived polyprotein that accumulates during early stage of infection. As soon P123' is cleaved into mature proteins, the plus-strand RNAs synthesis begins. Cytoplasmic capping enzyme that catalyzes two virus-specific reactions: methyltransferase and nsP1 guanylyltransferase. mRNA-capping is necessary since all viral RNAs are synthesized in the cytoplasm, and host capping enzymes are restricted to the nucleus. The enzymatic reaction involves a covalent link between 7-methyl-GMP and nsP1, whereas eukaryotic capping enzymes form a covalent complex only with GMP. nsP1 capping consists in the following reactions: GTP is first methylated into 7-methyl-GMP and then is covalently linked to nsP1 to form the m7GMp-nsP1 complex from which 7-methyl-GMP complex is transferred to the mRNA to create the cap structure. NsP1 is needed for the initiation of the minus-strand RNAs synthesis. Probably serves as a membrane anchor for the replication complex composed of nsP1-nsP4. Palmitoylated nsP1 is remodeling host cell cytoskeleton, and induces filopodium-like structure formation at the surface of the host cell. Its function is as follows. Multifunctional protein whose N-terminus is part of the RNA polymerase complex and displays NTPase, RNA triphosphatase and helicase activities. NTPase and RNA triphosphatase are involved in viral RNA capping and helicase keeps a check on the dsRNA replication intermediates. The C-terminus harbors a protease that specifically cleaves the polyproteins and releases the mature proteins. Required for the shutoff of minus-strand RNAs synthesis. Specifically inhibits the host IFN response by promoting the nuclear export of host STAT1. Also inhibits host transcription by inducing rapid proteasome-dependent degradation of POLR2A, a catalytic subunit of the RNAPII complex. The resulting inhibition of cellular protein synthesis serves to ensure maximal viral gene expression and to evade host immune response. In terms of biological role, seems to be essential for minus-strand RNAs and subgenomic 26S mRNAs synthesis. Displays mono-ADP-ribosylhydrolase activity. ADP-ribosylation is a post-translational modification that controls various processes of the host cell and the virus probably needs to revert it for optimal viral replication. Binds proteins of FXR family and sequesters them into the viral RNA replication complexes thereby inhibiting the formation of host stress granules on viral mRNAs. The nsp3'-FXR complexes bind viral RNAs and probably orchestrate the assembly of viral replication complexes, thanks to the ability of FXR family members to self-assemble and bind DNA. Functionally, seems to be essential for minus-strand RNAs and subgenomic 26S mRNAs synthesis. Displays mono-ADP-ribosylhydrolase activity. ADP-ribosylation is a post-translantional modification that controls various processes of the host cell and the virus probably needs to revert it for optimal viral replication. Binds proteins of G3BP family and sequesters them into the viral RNA replication complexes thereby inhibiting the formation of host stress granules on viral mRNAs. The nsp3-G3BP complexes bind viral RNAs and probably orchestrate the assembly of viral replication complexes, thanks to the ability of G3BP family members to self-assemble and bind DNA. RNA dependent RNA polymerase. Replicates genomic and antigenomic RNA by recognizing replications specific signals. The early replication complex formed by the polyprotein P123 and nsP4 synthesizes minus-strand RNAs. The late replication complex composed of fully processed nsP1-nsP4 is responsible for the production of genomic and subgenomic plus-strand RNAs. The core catalytic domain of nsP4 also possesses terminal adenylyltransferase (TATase) activity that is probably involved in maintenance and repair of the poly(A) tail, an element required for replication of the viral genome. The sequence is that of Polyprotein P1234 from Aura virus (AURAV).